The following is a 78-amino-acid chain: MTTPNAMPRKTNPLRQQVLGALIKTKPTVWTHKRIDPESPDPRKPRVIETKVHGQEFTGLARNVSEENVDRIAKRWIK.

This is Gene 63 protein (63) from Mycobacterium phage L5 (Mycobacteriophage L5).